The following is a 313-amino-acid chain: Olfactory receptor 1f45 (313 aa).

Over 1–25 (MSSTNQSSVTEFLLLGLSRQPQQQQ) the chain is Extracellular. The N-linked (GlcNAc...) asparagine glycan is linked to Asn-5. The helical transmembrane segment at 26–50 (LLFLLFLIMYLATVLGNLLIILAIG) threads the bilayer. Over 51 to 57 (TDSRLHT) the chain is Cytoplasmic. Residues 58-79 (PMYFFLSNLSFVDVCFSSTTVP) traverse the membrane as a helical segment. Topologically, residues 80 to 100 (KVLANHILGSQAISFSGCLTQ) are extracellular. An intrachain disulfide couples Cys-97 to Cys-189. A helical transmembrane segment spans residues 101–120 (LYFLAVFGNMDNFLLAVMSY). Over 121–139 (DRFVAICHPLHYTTKMTRQ) the chain is Cytoplasmic. The chain crosses the membrane as a helical span at residues 140 to 158 (LCVLLVVGSWVVANMNCLL). At 159-196 (HILLMARLSFCADNMIPHFFCDGTPLLKLSCSDTHLNE) the chain is on the extracellular side. Residues 197–219 (LMILTEGAVVMVTPFVCILISYI) traverse the membrane as a helical segment. The Cytoplasmic segment spans residues 220-236 (HITCAVLRVSSPRGGWK). A helical membrane pass occupies residues 237–260 (SFSTCGSHLAVVCLFYGTVIAVYF). The Extracellular portion of the chain corresponds to 261–272 (NPSSSHLAGRDM). The helical transmembrane segment at 273–292 (AAAVMYAVVTPMLNPFIYSL) threads the bilayer. Residues 293–313 (RNSDMKAALRKVLAMRFPSKQ) are Cytoplasmic-facing.

This sequence belongs to the G-protein coupled receptor 1 family. In terms of tissue distribution, olfactory epithelium.

It is found in the cell membrane. Functionally, odorant receptor. The sequence is that of Olfactory receptor 1f45 (Or1f45) from Rattus norvegicus (Rat).